The chain runs to 366 residues: Histidinol-phosphate aminotransferase (366 aa).

Lys228 is modified (N6-(pyridoxal phosphate)lysine).

It belongs to the class-II pyridoxal-phosphate-dependent aminotransferase family. Histidinol-phosphate aminotransferase subfamily. As to quaternary structure, homodimer. Requires pyridoxal 5'-phosphate as cofactor.

It carries out the reaction L-histidinol phosphate + 2-oxoglutarate = 3-(imidazol-4-yl)-2-oxopropyl phosphate + L-glutamate. Its pathway is amino-acid biosynthesis; L-histidine biosynthesis; L-histidine from 5-phospho-alpha-D-ribose 1-diphosphate: step 7/9. This chain is Histidinol-phosphate aminotransferase, found in Corynebacterium glutamicum (strain ATCC 13032 / DSM 20300 / JCM 1318 / BCRC 11384 / CCUG 27702 / LMG 3730 / NBRC 12168 / NCIMB 10025 / NRRL B-2784 / 534).